The chain runs to 583 residues: Threonine--tRNA ligase (583 aa).

Residues Asp-185 to Pro-478 are catalytic. Zn(2+) contacts are provided by Cys-278, His-329, and His-455.

The protein belongs to the class-II aminoacyl-tRNA synthetase family. In terms of assembly, homodimer. It depends on Zn(2+) as a cofactor.

Its subcellular location is the cytoplasm. It catalyses the reaction tRNA(Thr) + L-threonine + ATP = L-threonyl-tRNA(Thr) + AMP + diphosphate + H(+). Catalyzes the attachment of threonine to tRNA(Thr) in a two-step reaction: L-threonine is first activated by ATP to form Thr-AMP and then transferred to the acceptor end of tRNA(Thr). Also edits incorrectly charged L-seryl-tRNA(Thr). This Borrelia turicatae (strain 91E135) protein is Threonine--tRNA ligase.